A 166-amino-acid chain; its full sequence is NAD(P)H-quinone oxidoreductase subunit I, chloroplastic (166 aa).

4Fe-4S ferredoxin-type domains lie at 55–84 (GRIH…VDWK) and 95–124 (LNYS…MTEE). Positions 64, 67, 70, 74, 104, 107, 110, and 114 each coordinate [4Fe-4S] cluster.

The protein belongs to the complex I 23 kDa subunit family. As to quaternary structure, NDH is composed of at least 16 different subunits, 5 of which are encoded in the nucleus. The cofactor is [4Fe-4S] cluster.

The protein resides in the plastid. Its subcellular location is the chloroplast thylakoid membrane. It catalyses the reaction a plastoquinone + NADH + (n+1) H(+)(in) = a plastoquinol + NAD(+) + n H(+)(out). The enzyme catalyses a plastoquinone + NADPH + (n+1) H(+)(in) = a plastoquinol + NADP(+) + n H(+)(out). Functionally, NDH shuttles electrons from NAD(P)H:plastoquinone, via FMN and iron-sulfur (Fe-S) centers, to quinones in the photosynthetic chain and possibly in a chloroplast respiratory chain. The immediate electron acceptor for the enzyme in this species is believed to be plastoquinone. Couples the redox reaction to proton translocation, and thus conserves the redox energy in a proton gradient. The sequence is that of NAD(P)H-quinone oxidoreductase subunit I, chloroplastic from Bahiopsis tomentosa (Tecote).